Consider the following 143-residue polypeptide: Transcriptional regulator MraZ (143 aa).

2 SpoVT-AbrB domains span residues 5–47 (EYLH…PLDE) and 76–119 (ATEC…SQAL).

The protein belongs to the MraZ family. As to quaternary structure, forms oligomers.

It is found in the cytoplasm. It localises to the nucleoid. In Desulfitobacterium hafniense (strain DSM 10664 / DCB-2), this protein is Transcriptional regulator MraZ.